Here is a 293-residue protein sequence, read N- to C-terminus: uncharacterized protein (293 aa).

The HTH lysR-type domain maps to 1-58 (MELKQLITFITAAEHVNFTLTAKMLNYAQSSVTSQIKSLEEEIGTPLFERLGKRLILT). A DNA-binding region (H-T-H motif) is located at residues 18-37 (FTLTAKMLNYAQSSVTSQIK).

The protein belongs to the LysR transcriptional regulatory family.

Its subcellular location is the cytoplasm. This is an uncharacterized protein from Bacillus subtilis (strain 168).